Reading from the N-terminus, the 87-residue chain is UPF0248 protein TON_0940 (87 aa).

Belongs to the UPF0248 family.

The protein is UPF0248 protein TON_0940 of Thermococcus onnurineus (strain NA1).